The primary structure comprises 265 residues: Undecaprenyl-diphosphatase (265 aa).

A run of 8 helical transmembrane segments spans residues 7-27 (VIVS…PISS), 45-65 (TKIL…YFFH), 86-106 (LHIL…YKKI), 108-128 (LLFN…FLLI), 145-165 (ISLL…YPGF), 186-206 (IEFS…YDFI), 214-234 (ILDL…SILC), and 245-265 (TSLI…YFIN).

This sequence belongs to the UppP family.

It localises to the cell membrane. The enzyme catalyses di-trans,octa-cis-undecaprenyl diphosphate + H2O = di-trans,octa-cis-undecaprenyl phosphate + phosphate + H(+). Catalyzes the dephosphorylation of undecaprenyl diphosphate (UPP). Confers resistance to bacitracin. This chain is Undecaprenyl-diphosphatase, found in Buchnera aphidicola subsp. Acyrthosiphon pisum (strain 5A).